A 327-amino-acid polypeptide reads, in one-letter code: AA9 family lytic polysaccharide monooxygenase G (327 aa).

The signal sequence occupies residues Met-1–Gly-20. Cu(2+)-binding residues include His-21 and His-96. An intrachain disulfide couples Cys-62 to Cys-185. An O2-binding site is contributed by His-172. Tyr-182 lines the Cu(2+) pocket. N-linked (GlcNAc...) asparagine glycosylation occurs at Asn-290. Residues Gly-291–Val-327 form the CBM1 domain.

This sequence belongs to the polysaccharide monooxygenase AA9 family. The cofactor is Cu(2+).

Its subcellular location is the secreted. The enzyme catalyses [(1-&gt;4)-beta-D-glucosyl]n+m + reduced acceptor + O2 = 4-dehydro-beta-D-glucosyl-[(1-&gt;4)-beta-D-glucosyl]n-1 + [(1-&gt;4)-beta-D-glucosyl]m + acceptor + H2O.. In terms of biological role, lytic polysaccharide monooxygenase (LPMO) that depolymerizes crystalline and amorphous polysaccharides via the oxidation of scissile alpha- or beta-(1-4)-glycosidic bonds, yielding C1 or C4 oxidation products. Catalysis by LPMOs requires the reduction of the active-site copper from Cu(II) to Cu(I) by a reducing agent and H(2)O(2) or O(2) as a cosubstrate. This Aspergillus tamarii protein is AA9 family lytic polysaccharide monooxygenase G.